The sequence spans 215 residues: Large ribosomal subunit protein bL25 (215 aa).

The tract at residues 170 to 215 is disordered; that stretch reads DPDTSVASVTPPTTEEDLDTDDVDENAEPELVGAENDSADEESENK. 2 stretches are compositionally biased toward acidic residues: residues 183-197 and 206-215; these read TEED…ENAE and DSADEESENK.

It belongs to the bacterial ribosomal protein bL25 family. CTC subfamily. Part of the 50S ribosomal subunit; part of the 5S rRNA/L5/L18/L25 subcomplex. Contacts the 5S rRNA. Binds to the 5S rRNA independently of L5 and L18.

Functionally, this is one of the proteins that binds to the 5S RNA in the ribosome where it forms part of the central protuberance. This Oceanobacillus iheyensis (strain DSM 14371 / CIP 107618 / JCM 11309 / KCTC 3954 / HTE831) protein is Large ribosomal subunit protein bL25.